The chain runs to 347 residues: Actin-like protein MamK (347 aa).

Residues lysine 9, 20 to 21, and aspartate 76 contribute to the ATP site; that span reads TS. Glutamate 143 contacts Mg(2+). Residues 164–166, 218–222, and glycine 289 each bind ATP; these read AGT and KEQFS.

Belongs to the FtsA/MreB family. MamK subfamily. As to quaternary structure, forms cytoplasmic filaments. Filaments are parallel (polar) and double-helical. MamK subunits from each of the two strands are juxtaposed, each monomer binds ADP. At cell poles and septa interacts with methyl-accepting chemotaxis protein Amb0944 (MCP10). Forms filaments with MamK-like protein.

The protein localises to the cytoplasm. It is found in the cytoskeleton. It localises to the magnetosome membrane. It carries out the reaction ATP + H2O = ADP + phosphate + H(+). Its activity is regulated as follows. Filament turnover is promoted by MamJ and/or LimJ which have overlapping function; at least one other protein is required for turnover. MamK filament dynamics are probably required for the assembly or maintenance of the magnetosome chain. Functionally, protein with ATPase activity which forms dynamic cytoplasmic filaments (probably with paralog MamK-like) that organize magnetosomes into long chains running parallel to the long axis of the cell. Turnover of MamK filaments is probably promoted by MamK-like, which provides a monomer pool. Forms twisted filaments in the presence of ATP or GTP. Serves to close gaps between magnetosomes in the chain. Interaction with MCP10 is involved in controlling the response to magnetic fields, possibly by controlling flagellar rotation. Expression in E.coli yields a filament in the cell's longitudinal axis; the protein nucleates at several sites and one extremity of the filament is located at the cell pole. This chain is Actin-like protein MamK (mamK), found in Paramagnetospirillum magneticum (strain ATCC 700264 / AMB-1) (Magnetospirillum magneticum).